The sequence spans 146 residues: 3-dehydroquinate dehydratase (146 aa).

Residue tyrosine 23 is the Proton acceptor of the active site. 3 residues coordinate substrate: asparagine 75, histidine 81, and aspartate 88. The active-site Proton donor is histidine 101. Residues 102–103 and arginine 112 contribute to the substrate site; that span reads LS.

It belongs to the type-II 3-dehydroquinase family. As to quaternary structure, homododecamer.

It carries out the reaction 3-dehydroquinate = 3-dehydroshikimate + H2O. The protein operates within metabolic intermediate biosynthesis; chorismate biosynthesis; chorismate from D-erythrose 4-phosphate and phosphoenolpyruvate: step 3/7. Catalyzes a trans-dehydration via an enolate intermediate. The sequence is that of 3-dehydroquinate dehydratase from Marinobacter nauticus (strain ATCC 700491 / DSM 11845 / VT8) (Marinobacter aquaeolei).